The primary structure comprises 1056 residues: ATP-dependent helicase wrn-1 (1056 aa).

Residues 1–102 (MISDDDDLPS…SSSDDSDQGD (102 aa)) form a disordered region. Tandem repeats lie at residues 17 to 26 (NEELPETEPE) and 28 to 37 (NDELPETEPE). The 2 X 10 AA repeats of N-[ED]-E-L-P-E-T-E-P-E stretch occupies residues 17 to 37 (NEELPETEPEDNDELPETEPE). The segment covering 19-38 (ELPETEPEDNDELPETEPES) has biased composition (acidic residues). Positions 43 to 53 (PTVTSNKTENQ) are enriched in polar residues. The span at 54-63 (VADEDYDSFD) shows a compositional bias: acidic residues. The 171-residue stretch at 236-406 (VRNVLGGKDQ…IANLRLRKPL (171 aa)) folds into the Helicase ATP-binding domain. An ATP-binding site is contributed by 249–256 (MSTGYGKS). The DEAH box signature appears at 348 to 351 (DEAH). Residues 427 to 583 (MAEDLGLFMK…NLTMMLRQLE (157 aa)) form the Helicase C-terminal domain. Zn(2+)-binding residues include C591, C614, C615, and C618. The interval 749–771 (KEKAAPSTVPGASRSQSTKSSTE) is disordered. Residues 761–771 (SRSQSTKSSTE) are compositionally biased toward polar residues. Residues 806–886 (PEKIDQLRSR…VQFSKETGIA (81 aa)) form the HRDC domain. The segment at 1018 to 1056 (QEKPDIQSMPSTSNPSTIKTVPSTPSSSLRAPPLKKFKL) is disordered. The segment covering 1025–1046 (SMPSTSNPSTIKTVPSTPSSSL) has biased composition (polar residues).

It belongs to the helicase family. RecQ subfamily. It depends on Zn(2+) as a cofactor.

It is found in the nucleus. It catalyses the reaction Couples ATP hydrolysis with the unwinding of duplex DNA by translocating in the 3'-5' direction.. The enzyme catalyses ATP + H2O = ADP + phosphate + H(+). Functionally, essential for the formation of DNA replication focal centers; stably associates with foci elements generating binding sites for RP-A. Exhibits a magnesium-dependent ATP-dependent 3'-5' DNA-helicase activity. May be involved in the control of genomic stability. This chain is ATP-dependent helicase wrn-1 (wrn-1), found in Caenorhabditis elegans.